Here is a 130-residue protein sequence, read N- to C-terminus: Small ribosomal subunit protein uS9 (130 aa).

This sequence belongs to the universal ribosomal protein uS9 family.

This chain is Small ribosomal subunit protein uS9, found in Syntrophobacter fumaroxidans (strain DSM 10017 / MPOB).